Consider the following 276-residue polypeptide: 4-chlorobenzoyl coenzyme A dehalogenase-2 (276 aa).

Substrate is bound at residue 66–71 (AGFDLE). Histidine 93 (proton acceptor) is an active-site residue. Glycine 117 lines the substrate pocket. Aspartate 148 serves as the catalytic Nucleophile. Arginine 261 contacts substrate.

This sequence belongs to the enoyl-CoA hydratase/isomerase family. Homotetramer.

The enzyme catalyses 4-chlorobenzoyl-CoA + H2O = 4-hydroxybenzoyl-CoA + chloride + H(+). It functions in the pathway xenobiotic degradation; 4-chlorobenzoate degradation; 4-hydroxybenzoate from 4-chlorobenzoate: step 2/3. In terms of biological role, dehalogenates 4-chlorobenzoyl-CoA, 4-iodobenzoyl-CoA, 4-bromobenzoyl-CoA and, at a slower rate, 4-fluorobenzoyl-CoA. Does not dehalogenate 2-chlorobenzoyl-CoA or 3-chlorobenzoyl-CoA. The sequence is that of 4-chlorobenzoyl coenzyme A dehalogenase-2 from Arthrobacter sp.